The sequence spans 212 residues: MNSFSTSAFGPVAFSLGLLLVLPAAFPAPVLPGEDSKDVAAPHSQPLTSSERIDKHIRYILDGISALRKETCNRSNMCDSTKEALAENNLNLPKMAEKDGCFQSGFNEDTCLVKIITGLLEFEVYLEYLQNRFESSEEQARAVQMSTKVLIQLLQKKAKNLDAITTPEPTTNASLLTKLQAQNQWLQDMTTHLILRSFKEFLQSSLRALRQM.

A signal peptide spans 1–29; it reads MNSFSTSAFGPVAFSLGLLLVLPAAFPAP. 2 cysteine pairs are disulfide-bonded: Cys72-Cys78 and Cys101-Cys111. Residue Asn73 is glycosylated (N-linked (GlcNAc...) asparagine). An N-linked (GlcNAc...) asparagine glycan is attached at Asn172.

It belongs to the IL-6 superfamily. As to quaternary structure, component of a hexamer of two molecules each of IL6, IL6R and IL6ST; first binds to IL6R to associate with the signaling subunit IL6ST. Interacts with IL6R (via the N-terminal ectodomain); this interaction may be affected by IL6R-binding with SORL1, hence decreasing IL6 cis signaling. Interacts with SORL1 (via the N-terminal ectodomain); this interaction leads to IL6 internalization and lysosomal degradation. May form a trimeric complex with the soluble SORL1 ectodomain and soluble IL6R receptor; this interaction might stabilize circulating IL6, hence promoting IL6 trans signaling.

The protein localises to the secreted. Functionally, cytokine with a wide variety of biological functions in immunity, tissue regeneration, and metabolism. Binds to IL6R, then the complex associates to the signaling subunit IL6ST/gp130 to trigger the intracellular IL6-signaling pathway. The interaction with the membrane-bound IL6R and IL6ST stimulates 'classic signaling', whereas the binding of IL6 and soluble IL6R to IL6ST stimulates 'trans-signaling'. Alternatively, 'cluster signaling' occurs when membrane-bound IL6:IL6R complexes on transmitter cells activate IL6ST receptors on neighboring receiver cells. In terms of biological role, IL6 is a potent inducer of the acute phase response. Rapid production of IL6 contributes to host defense during infection and tissue injury, but excessive IL6 synthesis is involved in disease pathology. In the innate immune response, is synthesized by myeloid cells, such as macrophages and dendritic cells, upon recognition of pathogens through toll-like receptors (TLRs) at the site of infection or tissue injury. In the adaptive immune response, is required for the differentiation of B cells into immunoglobulin-secreting cells. Plays a major role in the differentiation of CD4(+) T cell subsets. Essential factor for the development of T follicular helper (Tfh) cells that are required for the induction of germinal-center formation. Required to drive naive CD4(+) T cells to the Th17 lineage. Also required for proliferation of myeloma cells and the survival of plasmablast cells. Its function is as follows. Acts as an essential factor in bone homeostasis and on vessels directly or indirectly by induction of VEGF, resulting in increased angiogenesis activity and vascular permeability. Induces, through 'trans-signaling' and synergistically with IL1B and TNF, the production of VEGF. Involved in metabolic controls, is discharged into the bloodstream after muscle contraction increasing lipolysis and improving insulin resistance. 'Trans-signaling' in central nervous system also regulates energy and glucose homeostasis. Mediates, through GLP-1, crosstalk between insulin-sensitive tissues, intestinal L cells and pancreatic islets to adapt to changes in insulin demand. Also acts as a myokine. Plays a protective role during liver injury, being required for maintenance of tissue regeneration. Also has a pivotal role in iron metabolism by regulating HAMP/hepcidin expression upon inflammation or bacterial infection. Through activation of IL6ST-YAP-NOTCH pathway, induces inflammation-induced epithelial regeneration. In Cercocebus atys (Sooty mangabey), this protein is Interleukin-6 (IL6).